Consider the following 340-residue polypeptide: DNA-directed RNA polymerase subunit alpha (340 aa).

Residues 1–233 are alpha N-terminal domain (alpha-NTD); it reads MIQDEIKVST…DLFIPLINSE (233 aa). An alpha C-terminal domain (alpha-CTD) region spans residues 265–340; sequence TKDVAFKHIF…IQLPKNKNYL (76 aa).

Belongs to the RNA polymerase alpha chain family. In plastids the minimal PEP RNA polymerase catalytic core is composed of four subunits: alpha, beta, beta', and beta''. When a (nuclear-encoded) sigma factor is associated with the core the holoenzyme is formed, which can initiate transcription.

Its subcellular location is the plastid. It localises to the chloroplast. It catalyses the reaction RNA(n) + a ribonucleoside 5'-triphosphate = RNA(n+1) + diphosphate. Functionally, DNA-dependent RNA polymerase catalyzes the transcription of DNA into RNA using the four ribonucleoside triphosphates as substrates. The sequence is that of DNA-directed RNA polymerase subunit alpha from Marchantia polymorpha (Common liverwort).